Consider the following 449-residue polypeptide: Tubulin beta-6 chain (449 aa).

8 residues coordinate GTP: Gln11, Glu69, Ser138, Gly142, Thr143, Gly144, Asn204, and Asn226. Residue Glu69 participates in Mg(2+) binding. The disordered stretch occupies residues 425–449 (YQDATADDEGEYEEDEDEEEILDHE). Positions 429-449 (TADDEGEYEEDEDEEEILDHE) are enriched in acidic residues.

It belongs to the tubulin family. In terms of assembly, dimer of alpha and beta chains. A typical microtubule is a hollow water-filled tube with an outer diameter of 25 nm and an inner diameter of 15 nM. Alpha-beta heterodimers associate head-to-tail to form protofilaments running lengthwise along the microtubule wall with the beta-tubulin subunit facing the microtubule plus end conferring a structural polarity. Microtubules usually have 13 protofilaments but different protofilament numbers can be found in some organisms and specialized cells. Requires Mg(2+) as cofactor.

It localises to the cytoplasm. It is found in the cytoskeleton. Tubulin is the major constituent of microtubules, a cylinder consisting of laterally associated linear protofilaments composed of alpha- and beta-tubulin heterodimers. Microtubules grow by the addition of GTP-tubulin dimers to the microtubule end, where a stabilizing cap forms. Below the cap, tubulin dimers are in GDP-bound state, owing to GTPase activity of alpha-tubulin. In Arabidopsis thaliana (Mouse-ear cress), this protein is Tubulin beta-6 chain (TUBB6).